The primary structure comprises 953 residues: 2-oxoglutarate dehydrogenase E1 component (953 aa).

Belongs to the alpha-ketoglutarate dehydrogenase family. Homodimer. Part of the 2-oxoglutarate dehydrogenase (OGDH) complex composed of E1 (2-oxoglutarate dehydrogenase), E2 (dihydrolipoamide succinyltransferase) and E3 (dihydrolipoamide dehydrogenase); the complex contains multiple copies of the three enzymatic components (E1, E2 and E3). The cofactor is thiamine diphosphate.

It carries out the reaction N(6)-[(R)-lipoyl]-L-lysyl-[protein] + 2-oxoglutarate + H(+) = N(6)-[(R)-S(8)-succinyldihydrolipoyl]-L-lysyl-[protein] + CO2. Its function is as follows. E1 component of the 2-oxoglutarate dehydrogenase (OGDH) complex which catalyzes the decarboxylation of 2-oxoglutarate, the first step in the conversion of 2-oxoglutarate to succinyl-CoA and CO(2). In Oceanobacillus iheyensis (strain DSM 14371 / CIP 107618 / JCM 11309 / KCTC 3954 / HTE831), this protein is 2-oxoglutarate dehydrogenase E1 component.